The primary structure comprises 406 residues: Acetate kinase (406 aa).

A Mg(2+)-binding site is contributed by Asn7. Residue Lys14 coordinates ATP. A substrate-binding site is contributed by Arg90. Asp147 (proton donor/acceptor) is an active-site residue. ATP is bound by residues 207–211, 283–285, and 331–335; these read HLGNG, DMR, and GVGEN. Glu385 contributes to the Mg(2+) binding site.

Belongs to the acetokinase family. In terms of assembly, homodimer. It depends on Mg(2+) as a cofactor. Requires Mn(2+) as cofactor.

The protein localises to the cytoplasm. It catalyses the reaction acetate + ATP = acetyl phosphate + ADP. Its pathway is metabolic intermediate biosynthesis; acetyl-CoA biosynthesis; acetyl-CoA from acetate: step 1/2. Catalyzes the formation of acetyl phosphate from acetate and ATP. Can also catalyze the reverse reaction. In Fervidobacterium nodosum (strain ATCC 35602 / DSM 5306 / Rt17-B1), this protein is Acetate kinase.